Consider the following 276-residue polypeptide: Small ribosomal subunit protein uS5w (276 aa).

The span at 1–15 (MAERGVERGGDRGDF) shows a compositional bias: basic and acidic residues. Positions 1–42 (MAERGVERGGDRGDFGRGFGGRGGGRGGPRGRGRRAGRAPEE) are disordered. The segment covering 16–28 (GRGFGGRGGGRGG) has biased composition (gly residues). The S5 DRBM domain maps to 87-150 (LKDEVMKIMP…ILAKLSVVPI (64 aa)).

Belongs to the universal ribosomal protein uS5 family.

In Arabidopsis thaliana (Mouse-ear cress), this protein is Small ribosomal subunit protein uS5w (RPS2D).